The sequence spans 475 residues: Putative F-box protein At3g58960 (475 aa).

Residues 1-49 (MDRISSLSNDIISNIVSFLSAKDAAVASVLSKRWQNIYTIVPNLEFDNT) form the F-box domain.

The chain is Putative F-box protein At3g58960 from Arabidopsis thaliana (Mouse-ear cress).